We begin with the raw amino-acid sequence, 160 residues long: Urease accessory protein UreE (160 aa).

This sequence belongs to the UreE family.

The protein localises to the cytoplasm. Its function is as follows. Involved in urease metallocenter assembly. Binds nickel. Probably functions as a nickel donor during metallocenter assembly. This is Urease accessory protein UreE from Acinetobacter baumannii (strain ACICU).